We begin with the raw amino-acid sequence, 335 residues long: Fructose-1,6-bisphosphatase class 1 1 (335 aa).

Mg(2+)-binding residues include Glu-92, Asp-114, Leu-116, and Asp-117. Residues Asp-117 to Ser-120, Asn-209, and Lys-275 contribute to the substrate site. Mg(2+) is bound at residue Glu-281.

This sequence belongs to the FBPase class 1 family. In terms of assembly, homotetramer. Mg(2+) serves as cofactor.

Its subcellular location is the cytoplasm. It carries out the reaction beta-D-fructose 1,6-bisphosphate + H2O = beta-D-fructose 6-phosphate + phosphate. The protein operates within carbohydrate biosynthesis; gluconeogenesis. The sequence is that of Fructose-1,6-bisphosphatase class 1 1 from Polaromonas naphthalenivorans (strain CJ2).